A 351-amino-acid chain; its full sequence is MSQARPATLRVAVLGAGSWGTALAAAASRRHPTVLWARDGAQAQAMAARHENTRYLPGVALPHALQVSADLAQALAHLAHDPAHALIILGVPVAGMTPLCTELAARLPALGLQAVPLVWTCKGFEEQTARLPHETVQAALGAMPGLAAGVLSGPSFAREVAQGLPVALTVASGSSAVRDAVTTALHGAAVRIYASTDVVGVEVGGALKNVIAVACGICDGLALGTNARAALITRGLAEMARFGAALGAQQETFAGLTGLGDLVLTATGELSRNRRVGLEIGAGRKLADILASGMTAEGVRCARAARDRARALNIELPITEAVCAVLFEGLSPMTAVSALLAREARPESPTP.

Positions 18, 19, 38, and 122 each coordinate NADPH. Residues Lys122, Gly153, and Ser155 each coordinate sn-glycerol 3-phosphate. Ala157 contacts NADPH. Sn-glycerol 3-phosphate is bound by residues Lys208, Asp261, Ser271, Arg272, and Asn273. Residue Lys208 is the Proton acceptor of the active site. Arg272 provides a ligand contact to NADPH. Glu297 is an NADPH binding site.

It belongs to the NAD-dependent glycerol-3-phosphate dehydrogenase family.

It is found in the cytoplasm. It carries out the reaction sn-glycerol 3-phosphate + NAD(+) = dihydroxyacetone phosphate + NADH + H(+). The enzyme catalyses sn-glycerol 3-phosphate + NADP(+) = dihydroxyacetone phosphate + NADPH + H(+). It participates in membrane lipid metabolism; glycerophospholipid metabolism. In terms of biological role, catalyzes the reduction of the glycolytic intermediate dihydroxyacetone phosphate (DHAP) to sn-glycerol 3-phosphate (G3P), the key precursor for phospholipid synthesis. This Bordetella pertussis (strain Tohama I / ATCC BAA-589 / NCTC 13251) protein is Glycerol-3-phosphate dehydrogenase [NAD(P)+].